A 162-amino-acid polypeptide reads, in one-letter code: NADH-quinone oxidoreductase subunit I 2 (162 aa).

2 4Fe-4S ferredoxin-type domains span residues 52-82 (LRRY…IEAG) and 93-122 (VRYD…EGPN). [4Fe-4S] cluster contacts are provided by C62, C65, C68, C72, C102, C105, C108, and C112.

Belongs to the complex I 23 kDa subunit family. As to quaternary structure, NDH-1 is composed of 14 different subunits. Subunits NuoA, H, J, K, L, M, N constitute the membrane sector of the complex. It depends on [4Fe-4S] cluster as a cofactor.

The protein resides in the cell inner membrane. It catalyses the reaction a quinone + NADH + 5 H(+)(in) = a quinol + NAD(+) + 4 H(+)(out). Its function is as follows. NDH-1 shuttles electrons from NADH, via FMN and iron-sulfur (Fe-S) centers, to quinones in the respiratory chain. The immediate electron acceptor for the enzyme in this species is believed to be ubiquinone. Couples the redox reaction to proton translocation (for every two electrons transferred, four hydrogen ions are translocated across the cytoplasmic membrane), and thus conserves the redox energy in a proton gradient. The chain is NADH-quinone oxidoreductase subunit I 2 from Rhodopseudomonas palustris (strain HaA2).